The sequence spans 270 residues: Transmembrane protein 176B (270 aa).

The next 4 helical transmembrane spans lie at 65-85, 95-115, 127-147, and 209-229; these read LALG…GVCL, ASGC…GAIV, VSSL…VLCV, and LFLA…GVGL. Phosphoserine occurs at positions 236, 245, 254, and 258. The segment at 237–270 is disordered; that stretch reads SQPLNEEGSEKRLLGENSVPPSPSREQTSTAIVL. Residues 260-270 show a composition bias toward polar residues; the sequence is SREQTSTAIVL.

The protein belongs to the TMEM176 family.

Its subcellular location is the nucleus membrane. Its function is as follows. May play a role in the process of maturation of dendritic cells. Required for the development of cerebellar granule cells. The protein is Transmembrane protein 176B (TMEM176B) of Pongo abelii (Sumatran orangutan).